Consider the following 65-residue polypeptide: MREGIHPKYNEVTVKCLCGNTFQTRSTKPEISTEICSACHPFFTGKQKLVDTAGRVERFKKRYGM.

Positions 16, 18, 36, and 39 each coordinate Zn(2+).

The protein belongs to the bacterial ribosomal protein bL31 family. Type A subfamily. In terms of assembly, part of the 50S ribosomal subunit. It depends on Zn(2+) as a cofactor.

Binds the 23S rRNA. The polypeptide is Large ribosomal subunit protein bL31 (Geotalea daltonii (strain DSM 22248 / JCM 15807 / FRC-32) (Geobacter daltonii)).